Consider the following 297-residue polypeptide: Giardin subunit alpha-6 (297 aa).

4 Annexin repeats span residues 3–72 (TTVQ…AYLW), 74–146 (KPGD…HWIL), 153–222 (FDID…AAHY), and 226–295 (HPAR…ILWR).

The protein belongs to the annexin family. Giardin subunit alpha subfamily.

Its subcellular location is the cytoplasm. It localises to the cytoskeleton. Functionally, giardins are involved in parasite attachment to the intestinal mucosa and in the cytoskeletal disassembly and reassembly that marks the transition from infectious trophozoite to transmissible cyst. They may interact with other cytoskeletal proteins such as microtubules in the microribbons or crossbridges, to maintain the integrity of the ventral disk. The protein is Giardin subunit alpha-6 of Giardia intestinalis (Giardia lamblia).